A 387-amino-acid polypeptide reads, in one-letter code: Patatin-05 (387 aa).

Positions 1-23 are cleaved as a signal peptide; sequence MATTKSVLVLIFMILATTSSTFA. In terms of domain architecture, PNPLA spans 32–230; the sequence is LSIDGGGIKG…TVADPALLSV (199 aa). Residues 36–41 carry the GXGXXG motif; that stretch reads GGGIKG. A GXSXG motif is present at residues 75 to 79; sequence GTSTG. Ser77 functions as the Nucleophile in the catalytic mechanism. N-linked (GlcNAc...) asparagine glycans are attached at residues Asn115 and Asn203. The active-site Proton acceptor is Asp216. The DGA/G signature appears at 216-218; the sequence is DGA.

It belongs to the patatin family. As to expression, tuber.

Its subcellular location is the vacuole. Its function is as follows. Probable lipolytic acyl hydrolase (LAH), an activity which is thought to be involved in the response of tubers to pathogens. The polypeptide is Patatin-05 (pat1-k1) (Solanum tuberosum (Potato)).